The chain runs to 137 residues: Large ribosomal subunit protein uL14 (137 aa).

It belongs to the universal ribosomal protein uL14 family. In terms of assembly, component of the large ribosomal subunit. Mature ribosomes consist of a small (40S) and a large (60S) subunit. The 40S subunit contains about 32 different proteins and 1 molecule of RNA (18S). The 60S subunit contains 45 different proteins and 3 molecules of RNA (25S, 5.8S and 5S).

It is found in the cytoplasm. In terms of biological role, component of the ribosome, a large ribonucleoprotein complex responsible for the synthesis of proteins in the cell. The small ribosomal subunit (SSU) binds messenger RNAs (mRNAs) and translates the encoded message by selecting cognate aminoacyl-transfer RNA (tRNA) molecules. The large subunit (LSU) contains the ribosomal catalytic site termed the peptidyl transferase center (PTC), which catalyzes the formation of peptide bonds, thereby polymerizing the amino acids delivered by tRNAs into a polypeptide chain. The nascent polypeptides leave the ribosome through a tunnel in the LSU and interact with protein factors that function in enzymatic processing, targeting, and the membrane insertion of nascent chains at the exit of the ribosomal tunnel. This Candida albicans (strain SC5314 / ATCC MYA-2876) (Yeast) protein is Large ribosomal subunit protein uL14.